Consider the following 348-residue polypeptide: Protein RecA (348 aa).

66-73 (GPESSGKT) serves as a coordination point for ATP.

This sequence belongs to the RecA family.

The protein localises to the cytoplasm. In terms of biological role, can catalyze the hydrolysis of ATP in the presence of single-stranded DNA, the ATP-dependent uptake of single-stranded DNA by duplex DNA, and the ATP-dependent hybridization of homologous single-stranded DNAs. It interacts with LexA causing its activation and leading to its autocatalytic cleavage. This Neisseria meningitidis serogroup B (strain ATCC BAA-335 / MC58) protein is Protein RecA.